Here is a 141-residue protein sequence, read N- to C-terminus: Large ribosomal subunit protein uL11 (141 aa).

Belongs to the universal ribosomal protein uL11 family. In terms of assembly, part of the ribosomal stalk of the 50S ribosomal subunit. Interacts with L10 and the large rRNA to form the base of the stalk. L10 forms an elongated spine to which L12 dimers bind in a sequential fashion forming a multimeric L10(L12)X complex. Post-translationally, one or more lysine residues are methylated.

Its function is as follows. Forms part of the ribosomal stalk which helps the ribosome interact with GTP-bound translation factors. This Alkaliphilus metalliredigens (strain QYMF) protein is Large ribosomal subunit protein uL11.